We begin with the raw amino-acid sequence, 316 residues long: MSDLNQGPGASTAQPKPIEAKPLRHPGRWVAAAIIVALLAWFIISALNNEAYGWDTYRSYLFDTRIATAALHTIALTLLSMILGVVLGAILAVMRMSGNPVMQGVAWLYLWIFRGTPIYVQLVFWGLLGSLYQSINLGFAEIDLQSLLSNMFLLAVIGLGLNEAAYMAEIVRSGIQAVPEGQMEASKALGMNWSMTMRRTILPQAMRIIIPPTGNELISMLKTTSLVVAIPYSLELYGRSMDIAYSLFEPVPMLLVAASWYLVITSILMVGQYYLEKHFEKGSTRTLTARQLAALADAEGAIPGNVTVVPETSKEN.

The segment covering Met1 to Gln14 has biased composition (polar residues). The disordered stretch occupies residues Met1–Ala20. Helical transmembrane passes span Trp29–Asn49, Ile74–Met94, Leu108–Leu128, Met151–Val171, Leu217–Tyr237, and Val251–Gly271. Residues Ala70–Tyr274 enclose the ABC transmembrane type-1 domain.

The protein belongs to the binding-protein-dependent transport system permease family. The complex is probably composed of two ATP-binding proteins (ArgV), two transmembrane proteins (ArgU) and a solute-binding protein (ArgT).

It localises to the cell membrane. Part of the ABC transporter complex ArgTUV involved in L-arginine import. May also transport L-citrulline. Probably responsible for the translocation of the substrate across the membrane. The chain is Arginine transport system permease protein ArgU from Corynebacterium glutamicum (strain ATCC 13032 / DSM 20300 / JCM 1318 / BCRC 11384 / CCUG 27702 / LMG 3730 / NBRC 12168 / NCIMB 10025 / NRRL B-2784 / 534).